A 208-amino-acid polypeptide reads, in one-letter code: Uracil phosphoribosyltransferase (208 aa).

Residues Arg-78, Arg-103, and 130–138 each bind 5-phospho-alpha-D-ribose 1-diphosphate; that span reads DPMLAIGGS. Uracil contacts are provided by residues Ile-193 and 198–200; that span reads GDA. 5-phospho-alpha-D-ribose 1-diphosphate is bound at residue Asp-199.

Belongs to the UPRTase family. Mg(2+) serves as cofactor.

The catalysed reaction is UMP + diphosphate = 5-phospho-alpha-D-ribose 1-diphosphate + uracil. Its pathway is pyrimidine metabolism; UMP biosynthesis via salvage pathway; UMP from uracil: step 1/1. Its activity is regulated as follows. Allosterically activated by GTP. Its function is as follows. Catalyzes the conversion of uracil and 5-phospho-alpha-D-ribose 1-diphosphate (PRPP) to UMP and diphosphate. The protein is Uracil phosphoribosyltransferase of Vibrio cholerae serotype O1 (strain ATCC 39315 / El Tor Inaba N16961).